Here is a 259-residue protein sequence, read N- to C-terminus: Ribonuclease PH (259 aa).

Residues arginine 88 and 126–128 (GTR) contribute to the phosphate site.

Belongs to the RNase PH family. As to quaternary structure, homohexameric ring arranged as a trimer of dimers.

The enzyme catalyses tRNA(n+1) + phosphate = tRNA(n) + a ribonucleoside 5'-diphosphate. Functionally, phosphorolytic 3'-5' exoribonuclease that plays an important role in tRNA 3'-end maturation. Removes nucleotide residues following the 3'-CCA terminus of tRNAs; can also add nucleotides to the ends of RNA molecules by using nucleoside diphosphates as substrates, but this may not be physiologically important. Probably plays a role in initiation of 16S rRNA degradation (leading to ribosome degradation) during starvation. This is Ribonuclease PH from Mycolicibacterium paratuberculosis (strain ATCC BAA-968 / K-10) (Mycobacterium paratuberculosis).